The chain runs to 305 residues: N-acetylglucosamine-1-phosphotransferase subunit gamma (305 aa).

Positions 1–24 are cleaved as a signal peptide; that stretch reads MAAGLARLLLLLGLSAGGPAPAGA. The 103-residue stretch at 69 to 171 folds into the MRH domain; the sequence is GKCFSLVEST…TFETPLVCHP (103 aa). An intrachain disulfide couples Cys-71 to Cys-84. N-linked (GlcNAc...) asparagine glycosylation is found at Asn-88 and Asn-115. Disulfide bonds link Cys-129–Cys-157 and Cys-142–Cys-169. In terms of domain architecture, DMAP1-binding spans 176 to 279; sequence VYPTLPEALQ…YTRPTETSNL (104 aa). The tract at residues 267 to 305 is disordered; sequence GIPYTRPTETSNLEHLGHETPRAKSPEQLRGDPGLRGSL. The segment covering 281–296 has biased composition (basic and acidic residues); sequence HLGHETPRAKSPEQLR.

Homodimer; disulfide-linked. Hexamer of two alpha (GNPTAB), two beta (GNPTAB) and two gamma (GNPTG) subunits; disulfide-linked. The alpha and/or the beta subunits of the enzyme constitute the catalytic subunits. Post-translationally, cys-245 mediates the formation of the interchain disulfide bond for formation of the homodimer. Cys-142, Cys-157 and Cys-169 are involved in intramolecular disulfide bonds formation. In terms of tissue distribution, widely expressed.

It is found in the secreted. The protein resides in the golgi apparatus. Non-catalytic subunit of the N-acetylglucosamine-1-phosphotransferase complex, an enzyme that catalyzes the formation of mannose 6-phosphate (M6P) markers on high mannose type oligosaccharides in the Golgi apparatus. Binds and presents the high mannose glycans of the acceptor to the catalytic alpha and beta subunits (GNPTAB). Enhances the rate of N-acetylglucosamine-1-phosphate transfer to the oligosaccharides of acid hydrolase acceptors. This chain is N-acetylglucosamine-1-phosphotransferase subunit gamma (GNPTG), found in Homo sapiens (Human).